The chain runs to 37 residues: GFGCPNDYPCHRHCKSIPGRXGGYCGGXHRLRCTCYR.

3 cysteine pairs are disulfide-bonded: cysteine 4/cysteine 25, cysteine 10/cysteine 33, and cysteine 14/cysteine 35.

The protein localises to the secreted. Its function is as follows. Has antibacterial activity against M.luteus and E.coli. This Mytilus edulis (Blue mussel) protein is Defensin-A.